The primary structure comprises 2430 residues: Protein TASOR 2 (2430 aa).

A phosphoserine mark is found at serine 19, serine 219, and serine 384. Disordered regions lie at residues 416 to 488 and 577 to 648; these read LDRK…GETA and RGTS…SQSS. Serine 685 is subject to Phosphoserine. The disordered stretch occupies residues 704-727; that stretch reads LLLQQKPPDDPVVKPKDRPPSARV. A compositionally biased stretch (basic and acidic residues) spans 710-723; it reads PPDDPVVKPKDRPP. 3 positions are modified to phosphoserine: serine 1025, serine 1087, and serine 1172. The tract at residues 1331-1360 is disordered; the sequence is LTESREVSSADNVSVYPSVSEEPVENKERK. Serine 1541 bears the Phosphoserine mark. A disordered region spans residues 1700-1727; it reads EAELHKETTGPGTAGPQSNTTSSLKGER. Over residues 1714–1723 the composition is skewed to polar residues; the sequence is GPQSNTTSSL. Residue serine 1848 is modified to Phosphoserine. Lysine 2007 participates in a covalent cross-link: Glycyl lysine isopeptide (Lys-Gly) (interchain with G-Cter in SUMO2). A phosphoserine mark is found at serine 2009, serine 2037, serine 2062, and serine 2066. The tract at residues 2046-2069 is disordered; that stretch reads SDPRPQGQPRRGYTASSLDSSSSW.

The protein belongs to the TASOR family.

The polypeptide is Protein TASOR 2 (Homo sapiens (Human)).